A 373-amino-acid chain; its full sequence is Enoyl-[acyl-carrier-protein] reductase, mitochondrial (373 aa).

The transit peptide at 1-53 (MLVSRRLTGARARAPLLASLLEAWCRQGRTTSSYSAFSEPSHVRALVYGNHGD) directs the protein to the mitochondrion. Lys61 carries the post-translational modification N6-acetyllysine; alternate. Lys61 carries the N6-succinyllysine; alternate modification. The active-site Proton donor is the Tyr94. Residues Asn167, 193 to 196 (NSGV), and 216 to 218 (RDR) contribute to the NADP(+) site. An N6-acetyllysine; alternate mark is found at Lys252 and Lys267. Lys252 and Lys267 each carry N6-succinyllysine; alternate. NADP(+) is bound by residues 285–288 (YGGM) and 310–312 (FWL). An N6-succinyllysine modification is found at Lys316. Residue Lys368 coordinates NADP(+).

It belongs to the zinc-containing alcohol dehydrogenase family. Quinone oxidoreductase subfamily. As to quaternary structure, homodimer. Interacts with PPARA in the nucleus and increases its activity.

It is found in the mitochondrion. The protein resides in the cytoplasm. The protein localises to the nucleus. The catalysed reaction is a 2,3-saturated acyl-[ACP] + NADP(+) = a (2E)-enoyl-[ACP] + NADPH + H(+). The enzyme catalyses (2E)-butenoyl-[ACP] + NADPH + H(+) = butanoyl-[ACP] + NADP(+). It carries out the reaction (2E)-hexenoyl-[ACP] + NADPH + H(+) = hexanoyl-[ACP] + NADP(+). It catalyses the reaction (2E)-octenoyl-[ACP] + NADPH + H(+) = octanoyl-[ACP] + NADP(+). The catalysed reaction is (2E)-decenoyl-[ACP] + NADPH + H(+) = decanoyl-[ACP] + NADP(+). The enzyme catalyses (2E)-dodecenoyl-[ACP] + NADPH + H(+) = dodecanoyl-[ACP] + NADP(+). It carries out the reaction (2E)-tetradecenoyl-[ACP] + NADPH + H(+) = tetradecanoyl-[ACP] + NADP(+). It catalyses the reaction (2E)-hexadecenoyl-[ACP] + NADPH + H(+) = hexadecanoyl-[ACP] + NADP(+). Catalyzes the NADPH-dependent reduction of trans-2-enoyl thioesters in mitochondrial fatty acid synthesis (fatty acid synthesis type II). Fatty acid chain elongation in mitochondria uses acyl carrier protein (ACP) as an acyl group carrier, but the enzyme accepts both ACP and CoA thioesters as substrates in vitro. Displays a preference for medium-chain over short- and long-chain substrates. May provide the octanoyl chain used for lipoic acid biosynthesis, regulating protein lipoylation and mitochondrial respiratory activity particularly in Purkinje cells. Involved in iron homeostasis; affecting Fe-S cluster assembly and ceramide metabolism. Required for proper morphology and bioenergetic functions of mitochondria. Required for maintenance of neurons. The sequence is that of Enoyl-[acyl-carrier-protein] reductase, mitochondrial (Mecr) from Rattus norvegicus (Rat).